A 215-amino-acid polypeptide reads, in one-letter code: MKYQLTALEARVIGCLLEKQVTTPEQYPLSVNGVVTACNQKTNREPVMNLSESEVQEQLDNLVKRHYLRTVSGFGNRVTKYEQRFCNSEFGDLKLSAAEVALITTLLLRGAQTPGELRSRAARMYEFSDMAEVESTLEQLANREDGPFVVRLAREPGKRESRYMHLFSGEVEDQPAVTDMSNAVDGDLQARVEALEIEVAELKQRLDSLLAHLGD.

Lys80 bears the N6-acetyllysine mark.

Belongs to the UPF0502 family.

This Shigella sonnei (strain Ss046) protein is UPF0502 protein YceH.